The chain runs to 135 residues: Small ribosomal subunit protein uS12 (135 aa).

The tract at residues 1-20 (MPTINQLVRKGRHSKVTKSK) is disordered. A compositionally biased stretch (basic residues) spans 9-18 (RKGRHSKVTK). The residue at position 102 (Asp102) is a 3-methylthioaspartic acid.

The protein belongs to the universal ribosomal protein uS12 family. As to quaternary structure, part of the 30S ribosomal subunit. Contacts proteins S8 and S17. May interact with IF1 in the 30S initiation complex.

Functionally, with S4 and S5 plays an important role in translational accuracy. In terms of biological role, interacts with and stabilizes bases of the 16S rRNA that are involved in tRNA selection in the A site and with the mRNA backbone. Located at the interface of the 30S and 50S subunits, it traverses the body of the 30S subunit contacting proteins on the other side and probably holding the rRNA structure together. The combined cluster of proteins S8, S12 and S17 appears to hold together the shoulder and platform of the 30S subunit. This chain is Small ribosomal subunit protein uS12, found in Lactobacillus helveticus (strain DPC 4571).